Consider the following 911-residue polypeptide: Alpha-actinin-4 (911 aa).

Residues 1–269 are actin-binding; the sequence is MVDYHAANQS…YVSSFYHAFS (269 aa). Residues 12-26 are interaction with VCL; it reads QYGPSSAGNGAGGGG. Y31 carries the phosphotyrosine modification. An interaction with VCL region spans residues 40–61; the sequence is RDLLLDPAWEKQQRKTFTAWCN. Calponin-homology (CH) domains follow at residues 50–154 and 163–269; these read KQQR…LRFA and TSAK…HAFS. An LXXLL motif motif is present at residues 84 to 88; it reads LMLLL. Residues 108 to 126 are interaction with VCL; sequence KINNVNKALDFIASKGVKL. K114 is subject to N6-acetyllysine. The segment at 177–192 is polyphosphoinositide (PIP2)-binding; the sequence is TAPYKNVNVQNFHISW. N6-acetyllysine is present on K214. Residue T249 is modified to Phosphothreonine. Spectrin repeat units lie at residues 293–403, 413–518, 528–639, and 649–752; these read HLME…WLLN, HLAE…ALEK, QLHL…ALLE, and HLRR…EVEN. N6-acetyllysine is present on residues K592 and K625. Position 696 is a phosphoserine (S696). The segment at 736 to 911 is mediates interaction with MICALL2; it reads WEQLLTTIAR…STALYGESDL (176 aa). 2 EF-hand domains span residues 765–800 and 806–841; these read EQMQ…LGYD and QGEA…ETTD. D778 contributes to the Ca(2+) binding site. K779 is modified (N6-acetyllysine). Residues D780 and E789 each coordinate Ca(2+). K859 is subject to N6-acetyllysine. S909 carries the phosphoserine modification.

This sequence belongs to the alpha-actinin family. Homodimer; antiparallel. Binds TRIM3 at the N-terminus. Interacts with MICALL2 (preferentially in opened conformation); stimulated by RAB13 activation. Identified in a complex with CASK, IQGAP1, MAGI2, NPHS1, SPTAN1 and SPTBN1. Identified in a IGF2BP1-dependent mRNP granule complex containing untranslated mRNAs. Component of the CART complex, at least composed of ACTN4, HGS/HRS, MYO5B and TRIM3. Interacts with MAGI1. Interacts with PDLIM2. Interacts with PPARG and RARA. Binds to VCL; this interaction triggers VCL conformational changes. Interacts with SEPTIN14. Interacts with IGSF8. Widely expressed.

Its subcellular location is the nucleus. The protein resides in the cytoplasm. It is found in the cell junction. It localises to the cytoskeleton. The protein localises to the stress fiber. Its subcellular location is the perinuclear region. In terms of biological role, F-actin cross-linking protein which is thought to anchor actin to a variety of intracellular structures. This is a bundling protein. Probably involved in vesicular trafficking via its association with the CART complex. The CART complex is necessary for efficient transferrin receptor recycling but not for EGFR degradation. Involved in tight junction assembly in epithelial cells probably through interaction with MICALL2. Links MICALL2 to the actin cytoskeleton and recruits it to the tight junctions. May also function as a transcriptional coactivator, stimulating transcription mediated by the nuclear hormone receptors PPARG and RARA. Association with IGSF8 regulates the immune synapse formation and is required for efficient T-cell activation. The chain is Alpha-actinin-4 from Homo sapiens (Human).